A 300-amino-acid chain; its full sequence is Tyrosine recombinase XerC (300 aa).

Positions 2-87 (TSLSPLLEKF…SIKSFYKYLV (86 aa)) constitute a Core-binding (CB) domain. Residues 108 to 294 (TLPKVLPVEE…TWEQLQQVYD (187 aa)) form the Tyr recombinase domain. Active-site residues include Arg148, Lys172, His246, Arg249, and His272. The active-site O-(3'-phospho-DNA)-tyrosine intermediate is the Tyr281.

Belongs to the 'phage' integrase family. XerC subfamily. As to quaternary structure, forms a cyclic heterotetrameric complex composed of two molecules of XerC and two molecules of XerD.

Its subcellular location is the cytoplasm. Functionally, site-specific tyrosine recombinase, which acts by catalyzing the cutting and rejoining of the recombining DNA molecules. The XerC-XerD complex is essential to convert dimers of the bacterial chromosome into monomers to permit their segregation at cell division. It also contributes to the segregational stability of plasmids. This is Tyrosine recombinase XerC from Myxococcus xanthus.